A 157-amino-acid polypeptide reads, in one-letter code: Transcriptional regulator MraZ (157 aa).

2 consecutive SpoVT-AbrB domains span residues 7–54 and 83–126; these read TYTM…GTSL and TEML…EPER.

Belongs to the MraZ family. In terms of assembly, forms oligomers.

The protein localises to the cytoplasm. It is found in the nucleoid. The sequence is that of Transcriptional regulator MraZ from Azorhizobium caulinodans (strain ATCC 43989 / DSM 5975 / JCM 20966 / LMG 6465 / NBRC 14845 / NCIMB 13405 / ORS 571).